Reading from the N-terminus, the 118-residue chain is Large ribosomal subunit protein uL24 (118 aa).

This sequence belongs to the universal ribosomal protein uL24 family. In terms of assembly, part of the 50S ribosomal subunit.

One of two assembly initiator proteins, it binds directly to the 5'-end of the 23S rRNA, where it nucleates assembly of the 50S subunit. Functionally, one of the proteins that surrounds the polypeptide exit tunnel on the outside of the subunit. The polypeptide is Large ribosomal subunit protein uL24 (Prochlorococcus marinus (strain MIT 9313)).